The sequence spans 417 residues: MSLSNKLSITDVDVKGKRVLIRVDFNVPLDENKNITNPQRIAGAIPTIKHALDNGAKAVILMSHLGRPNGAVNAKYSLKPVVPKLEELLGKPVTFAPDCVGPEVEAIVNKADNGAVILLENLRFHIEEEGSSKDKEGNKTKADKAKVEEFRKGLTALGDVYVNDAFGTAHRAHSSMVGVDLPQKAAGFLMKKELDYFAKALESPQRPFLAILGGAKVSDKIQLIDNLLDKVNTLIICGGMAFTFKKVLDNLAIGDSLFDKAGAETVPKLVEKAKAKNVKIVLPTDFITADKFDKDANTGLATDKDGIPDGWMGLDCGDESIKLYKEAIDEAKTILWNGPAGVFEFEKFAGGTKATLDAVVEGCKNGKIVIIGGGDTATVAAKYGVEDKLSHVSTGGGASLELLEGKELPGVTALSSK.

14 residues coordinate (2R)-3-phosphoglycerate: Val23, Asp24, Phe25, Asn26, Gln39, Arg40, Ser63, His64, Gly66, Arg67, Leu122, Arg123, His170, and Arg171. Gly214 serves as a coordination point for ADP. A CDP-binding site is contributed by Gly214. The AMP site is built by Ala215 and Lys216. Ala215 serves as a coordination point for ATP. Residue Ala215 coordinates Mg(2+). Asp219 is a CDP binding site. Asp219 contributes to the Mg(2+) binding site. Lys220 serves as a coordination point for AMP. Lys220 serves as a coordination point for ATP. Gly238 is a binding site for ADP. Position 238 (Gly238) interacts with CDP. AMP-binding residues include Gly239 and Gly313. ATP is bound by residues Gly239 and Gly313. CDP-binding residues include Gly338, Ala340, and Phe343. Phe343 is a binding site for ADP. Glu344 provides a ligand contact to AMP. 3 residues coordinate ATP: Glu344, Asp375, and Thr376. Residue Asp375 coordinates Mg(2+).

Belongs to the phosphoglycerate kinase family. In terms of assembly, monomer. The cofactor is Mg(2+).

The protein localises to the cytoplasm. Its subcellular location is the mitochondrion. It catalyses the reaction (2R)-3-phosphoglycerate + ATP = (2R)-3-phospho-glyceroyl phosphate + ADP. The protein operates within carbohydrate degradation; glycolysis; pyruvate from D-glyceraldehyde 3-phosphate: step 2/5. Catalyzes one of the two ATP producing reactions in the glycolytic pathway via the reversible conversion of 1,3-diphosphoglycerate to 3-phosphoglycerate. Both L- and D- forms of purine and pyrimidine nucleotides can be used as substrates, but the activity is much lower on pyrimidines. Negatively regulates the biosynthesis of acetyl-CoA from pyruvate in the mitochondrion. This chain is Phosphoglycerate kinase (pgk1), found in Hypocrea rufa (Trichoderma viride).